The following is a 1161-amino-acid chain: Cingulin (1161 aa).

Positions 1-403 are head; that stretch reads MSSLSADRKP…SLIHERFCGV (403 aa). Disordered regions lie at residues 29 to 53, 79 to 309, 649 to 678, 699 to 721, 739 to 773, and 1123 to 1161; these read GGFP…SPSK, SYGV…LGRD, QSEL…KRET, SKAI…ESNL, RLHS…AASR, and QSRR…TTSC. The ZIM signature appears at 51-65; that stretch reads PSKYGVAVRVQGISG. Polar residues-rich tracts occupy residues 84-104 and 117-129; these read LKTQ…SPYN and PQGS…QPSS. Over residues 189 to 203 the composition is skewed to low complexity; it reads NGIGSSLNGTGLNGS. The span at 273-305 shows a compositional bias: polar residues; it reads EASSTSPTINPYAPNTSATVPKLNSTKPSSTGS. Residues 413-1128 adopt a coiled-coil conformation; it reads SNMKTELEQA…RKIQQSRRST (716 aa). The span at 742–751 shows a compositional bias: low complexity; the sequence is SSVPDSSSSD. Basic and acidic residues predominate over residues 755–773; that stretch reads EENRSLKTQLEESRRAASR. The interval 1122 to 1161 is tail; sequence QQSRRSTLGSTLSSDEEDNYSDTKSITSILTDSPLQTTSC. The span at 1124–1134 shows a compositional bias: low complexity; it reads SRRSTLGSTLS. The span at 1143–1161 shows a compositional bias: polar residues; the sequence is DTKSITSILTDSPLQTTSC.

The protein belongs to the cingulin family. As to quaternary structure, homodimer.

The protein localises to the cell junction. It localises to the tight junction. Its function is as follows. Probably plays a role in the formation and regulation of the tight junction (TJ) paracellular permeability barrier. Note=Localizes to the apical junction complex composed of tight and adherens junctions. The protein is Cingulin of Danio rerio (Zebrafish).